Reading from the N-terminus, the 360-residue chain is Phosphoserine aminotransferase (360 aa).

R42 is an L-glutamate binding site. 4 residues coordinate pyridoxal 5'-phosphate: W102, T152, D171, and Q194. Residue K195 is modified to N6-(pyridoxal phosphate)lysine. 237-238 provides a ligand contact to pyridoxal 5'-phosphate; that stretch reads NT.

This sequence belongs to the class-V pyridoxal-phosphate-dependent aminotransferase family. SerC subfamily. In terms of assembly, homodimer. The cofactor is pyridoxal 5'-phosphate.

The protein resides in the cytoplasm. It carries out the reaction O-phospho-L-serine + 2-oxoglutarate = 3-phosphooxypyruvate + L-glutamate. It catalyses the reaction 4-(phosphooxy)-L-threonine + 2-oxoglutarate = (R)-3-hydroxy-2-oxo-4-phosphooxybutanoate + L-glutamate. It participates in amino-acid biosynthesis; L-serine biosynthesis; L-serine from 3-phospho-D-glycerate: step 2/3. The protein operates within cofactor biosynthesis; pyridoxine 5'-phosphate biosynthesis; pyridoxine 5'-phosphate from D-erythrose 4-phosphate: step 3/5. Functionally, catalyzes the reversible conversion of 3-phosphohydroxypyruvate to phosphoserine and of 3-hydroxy-2-oxo-4-phosphonooxybutanoate to phosphohydroxythreonine. In Coxiella burnetii (strain RSA 331 / Henzerling II), this protein is Phosphoserine aminotransferase.